The primary structure comprises 377 residues: 4-hydroxy-3-methylbut-2-en-1-yl diphosphate synthase (flavodoxin) (377 aa).

Cys-272, Cys-275, Cys-307, and Glu-314 together coordinate [4Fe-4S] cluster.

The protein belongs to the IspG family. It depends on [4Fe-4S] cluster as a cofactor.

The catalysed reaction is (2E)-4-hydroxy-3-methylbut-2-enyl diphosphate + oxidized [flavodoxin] + H2O + 2 H(+) = 2-C-methyl-D-erythritol 2,4-cyclic diphosphate + reduced [flavodoxin]. Its pathway is isoprenoid biosynthesis; isopentenyl diphosphate biosynthesis via DXP pathway; isopentenyl diphosphate from 1-deoxy-D-xylulose 5-phosphate: step 5/6. Its function is as follows. Converts 2C-methyl-D-erythritol 2,4-cyclodiphosphate (ME-2,4cPP) into 1-hydroxy-2-methyl-2-(E)-butenyl 4-diphosphate. This is 4-hydroxy-3-methylbut-2-en-1-yl diphosphate synthase (flavodoxin) from Zymomonas mobilis subsp. mobilis (strain ATCC 31821 / ZM4 / CP4).